Reading from the N-terminus, the 219-residue chain is Probable N-acetyltransferase camello (219 aa).

Transmembrane regions (helical) follow at residues 42–62 (FYFI…SYVL) and 64–84 (LTSL…EFHG). An N-acetyltransferase domain is found at 62-218 (LSLTSLVALL…TVIYYRYDIK (157 aa)).

Belongs to the camello family. In terms of tissue distribution, at the beginning of gastrulation, expressed in deep cells of the presumptive mesoderm. At later gastrulation stages, expressed at the interface between already involuted and preinvoluted mesoderm. At late neurula and tailbud stages, expressed in the deep mass of cells lying ventrally and laterally to the closed blastopore.

It is found in the golgi apparatus membrane. Plays a role in regulation of gastrulation, possibly by controlled reduction of cell adhesion which is necessary for optimal cell motility. This Xenopus laevis (African clawed frog) protein is Probable N-acetyltransferase camello.